A 183-amino-acid polypeptide reads, in one-letter code: Crossover junction endodeoxyribonuclease RuvC (183 aa).

Active-site residues include Asp-16, Glu-75, and Asp-147. The Mg(2+) site is built by Asp-16, Glu-75, and Asp-147.

Belongs to the RuvC family. As to quaternary structure, homodimer which binds Holliday junction (HJ) DNA. The HJ becomes 2-fold symmetrical on binding to RuvC with unstacked arms; it has a different conformation from HJ DNA in complex with RuvA. In the full resolvosome a probable DNA-RuvA(4)-RuvB(12)-RuvC(2) complex forms which resolves the HJ. Mg(2+) is required as a cofactor.

The protein localises to the cytoplasm. It carries out the reaction Endonucleolytic cleavage at a junction such as a reciprocal single-stranded crossover between two homologous DNA duplexes (Holliday junction).. The RuvA-RuvB-RuvC complex processes Holliday junction (HJ) DNA during genetic recombination and DNA repair. Endonuclease that resolves HJ intermediates. Cleaves cruciform DNA by making single-stranded nicks across the HJ at symmetrical positions within the homologous arms, yielding a 5'-phosphate and a 3'-hydroxyl group; requires a central core of homology in the junction. The consensus cleavage sequence is 5'-(A/T)TT(C/G)-3'. Cleavage occurs on the 3'-side of the TT dinucleotide at the point of strand exchange. HJ branch migration catalyzed by RuvA-RuvB allows RuvC to scan DNA until it finds its consensus sequence, where it cleaves and resolves the cruciform DNA. This chain is Crossover junction endodeoxyribonuclease RuvC, found in Azoarcus sp. (strain BH72).